Here is an 819-residue protein sequence, read N- to C-terminus: Tegument protein UL47 homolog (819 aa).

A compositionally biased stretch (basic residues) spans 1–15; sequence MQSGHYNRRQSRRQR. 2 disordered regions span residues 1–42 and 58–221; these read MQSG…THPP and LNSE…DYFS. The Nuclear localization signal motif lies at 11–31; it reads SRRQRISSNTTDSPRHTHGTR. The span at 32 to 42 shows a compositional bias: polar residues; sequence YRSTNWYTHPP. Residues 62–72 show a composition bias toward acidic residues; the sequence is MDQDSSSDASD. Polar residues predominate over residues 82–93; sequence STYNGSEQNTST. The span at 94 to 109 shows a compositional bias: basic and acidic residues; the sequence is SRHENRIFKLTEREAN. Tandem repeats lie at residues 117–132, 133–148, 149–164, 165–190, and 191–206. The interval 117 to 218 is 6 X 16 AA approximate tandem repeats; the sequence is DAIDDEGEAE…IDDEGEAEED (102 aa). Residues 118–219 show a composition bias toward acidic residues; that stretch reads AIDDEGEAEE…DDEGEAEEDY (102 aa). The 1-6; truncated repeat unit spans residues 207-218; the sequence is DAIDDEGEAEED. Positions 785–807 match the Nuclear export signal motif; sequence QPIPSVDLAENLMQYRNEILGLD.

The protein belongs to the alphaherpesvirinae HHV-1 UL47 family. As to quaternary structure, interacts with US3 kinase. Interacts with ORF24 and ORF27; these interactions seem important for efficient virion nuclear egress. Interacts with ORF17/VHS. Interacts with ORF9. In terms of processing, phosphorylated by US3. This phosphorylation is required for proper nuclear localization.

It is found in the virion tegument. It localises to the host nucleus. The protein localises to the host cytoplasm. Functionally, tegument protein that can bind to various RNA transcripts. Plays a role in the attenuation of selective viral and cellular mRNA degradation by modulating the activity of host shutoff RNase ORF17/VHS. Also plays a role in the primary envelopment of virions in the perinuclear space, probably by interacting with two nuclear egress proteins ORF24 and ORF27. In Varicella-zoster virus (strain Dumas) (HHV-3), this protein is Tegument protein UL47 homolog.